Consider the following 90-residue polypeptide: Serine-rich and transmembrane domain-containing 2 (90 aa).

Asparagine 11 carries an N-linked (GlcNAc...) asparagine glycan. A helical transmembrane segment spans residues 38–58; sequence YVGLFLSLLAILLILLFTMLL. The interval 69–90 is disordered; that stretch reads SDSTESVPQFTDVEMQSRIPTP.

The protein localises to the membrane. The protein is Serine-rich and transmembrane domain-containing 2 of Homo sapiens (Human).